A 193-amino-acid chain; its full sequence is Segregation and condensation protein B (193 aa).

Belongs to the ScpB family. Homodimer. Homodimerization may be required to stabilize the binding of ScpA to the Smc head domains. Component of a cohesin-like complex composed of ScpA, ScpB and the Smc homodimer, in which ScpA and ScpB bind to the head domain of Smc. The presence of the three proteins is required for the association of the complex with DNA.

Its subcellular location is the cytoplasm. In terms of biological role, participates in chromosomal partition during cell division. May act via the formation of a condensin-like complex containing Smc and ScpA that pull DNA away from mid-cell into both cell halves. The sequence is that of Segregation and condensation protein B from Clostridium botulinum (strain 657 / Type Ba4).